The chain runs to 448 residues: MNKIRVRYAPSPTGFLHIGNARTALFNYLFAKHHQGDFILRIEDTDLLRNVADGEASQLKNLRWLGIDWKEGPDINGPFGPYRQSERLTIYQKYAFELLEKNLAYRDFEKDKKNFAIRFKVPPNQTFTFCDLIRGKLTFLSKEIEDWVIIKSNGYPSYNFAASIDDHLMQISHIFRGEEHITNTPKQIMIYQSFNWSIPKFAHMTLILNQERKKLSKRDVNVCQFIQDYADLGYLPQSLFNFLSLLGFSPSSCKEILTPQEIISLFDVNRLNKSPAIFDKTKLDFFNNHYLRKTPIDDIVSFIKTKLDFFEVLPINNQKWLTKFILLFQERINYIKQLKDLYHHFFDKNTSLSEEVEQFLKKHDCALSVLTLFYHKLNLVVFEKEAINPIIAEIAQNMKINKKNLFVILRIGATHKMQGPSLALFLELLGKKQVLNNLSKIVELLKNQ.

The 'HIGH' region motif lies at 10 to 20 (PSPTGFLHIGN). The short motif at 214–218 (KLSKR) is the 'KMSKS' region element. Lysine 217 lines the ATP pocket.

It belongs to the class-I aminoacyl-tRNA synthetase family. Glutamate--tRNA ligase type 1 subfamily. As to quaternary structure, monomer.

The protein resides in the cytoplasm. It carries out the reaction tRNA(Glu) + L-glutamate + ATP = L-glutamyl-tRNA(Glu) + AMP + diphosphate. Functionally, catalyzes the attachment of glutamate to tRNA(Glu) in a two-step reaction: glutamate is first activated by ATP to form Glu-AMP and then transferred to the acceptor end of tRNA(Glu). The chain is Glutamate--tRNA ligase from Phytoplasma australiense.